The following is a 259-amino-acid chain: Phosphoribosylaminoimidazole-succinocarboxamide synthase (259 aa).

Belongs to the SAICAR synthetase family.

It catalyses the reaction 5-amino-1-(5-phospho-D-ribosyl)imidazole-4-carboxylate + L-aspartate + ATP = (2S)-2-[5-amino-1-(5-phospho-beta-D-ribosyl)imidazole-4-carboxamido]succinate + ADP + phosphate + 2 H(+). The protein operates within purine metabolism; IMP biosynthesis via de novo pathway; 5-amino-1-(5-phospho-D-ribosyl)imidazole-4-carboxamide from 5-amino-1-(5-phospho-D-ribosyl)imidazole-4-carboxylate: step 1/2. This is Phosphoribosylaminoimidazole-succinocarboxamide synthase from Hyphomonas neptunium (strain ATCC 15444).